Reading from the N-terminus, the 187-residue chain is Large ribosomal subunit protein uL6 (187 aa).

Belongs to the universal ribosomal protein uL6 family. As to quaternary structure, part of the 50S ribosomal subunit.

In terms of biological role, this protein binds to the 23S rRNA, and is important in its secondary structure. It is located near the subunit interface in the base of the L7/L12 stalk, and near the tRNA binding site of the peptidyltransferase center. The polypeptide is Large ribosomal subunit protein uL6 (Chloroflexus aggregans (strain MD-66 / DSM 9485)).